Here is a 368-residue protein sequence, read N- to C-terminus: Transcription factor TGA1 (368 aa).

A compositionally biased stretch (polar residues) spans 53-65; sequence LDNNVSEDTSHGT. The disordered stretch occupies residues 53 to 83; the sequence is LDNNVSEDTSHGTAGTPHMFDQEASTSRHPD. Residues 82–145 form the bZIP domain; it reads PDKIQRRLAQ…NGIDTNSLGF (64 aa). Coiled-coil stretches lie at residues 83–131 and 261–281; these read DKIQ…RQQG and NLKQ…EKLQ. Residues 84-104 form a basic motif region; that stretch reads KIQRRLAQNREAARKSRLRKK. Residues 110–124 are leucine-zipper; the sequence is LETSRLKLIQLEQEL. The region spanning 153–363 is the DOG1 domain; sequence IAAFEMEYGH…RALSSSWATR (211 aa). Cys-260 and Cys-266 are disulfide-bonded.

Belongs to the bZIP family. Binds DNA as a dimer. The reduced form interacts with NPR1. As to expression, predominantly expressed in roots.

Its subcellular location is the nucleus. Transcriptional activator that binds specifically to the DNA sequence 5'-TGACG-3'. Recognizes ocs elements like the as-1 motif of the cauliflower mosaic virus 35S promoter. Binding to the as-1-like cis elements mediate auxin- and salicylic acid-inducible transcription. May be involved in the induction of the systemic acquired resistance (SAR) via its interaction with NPR1. Could also bind to the Hex-motif (5'-TGACGTGG-3') another cis-acting element found in plant histone promoters. The chain is Transcription factor TGA1 (TGA1) from Arabidopsis thaliana (Mouse-ear cress).